The sequence spans 57 residues: Large ribosomal subunit protein bL32 (57 aa).

The disordered stretch occupies residues 1–20 (MAVQQRRSSKHRRDKRRSHD). Basic residues predominate over residues 7–18 (RSSKHRRDKRRS).

It belongs to the bacterial ribosomal protein bL32 family.

The protein is Large ribosomal subunit protein bL32 (rpmF) of Mycoplasma genitalium (strain ATCC 33530 / DSM 19775 / NCTC 10195 / G37) (Mycoplasmoides genitalium).